Reading from the N-terminus, the 208-residue chain is Protein-L-isoaspartate O-methyltransferase (208 aa).

Ser-59 is an active-site residue.

Belongs to the methyltransferase superfamily. L-isoaspartyl/D-aspartyl protein methyltransferase family.

The protein localises to the cytoplasm. It carries out the reaction [protein]-L-isoaspartate + S-adenosyl-L-methionine = [protein]-L-isoaspartate alpha-methyl ester + S-adenosyl-L-homocysteine. Its function is as follows. Catalyzes the methyl esterification of L-isoaspartyl residues in peptides and proteins that result from spontaneous decomposition of normal L-aspartyl and L-asparaginyl residues. It plays a role in the repair and/or degradation of damaged proteins. The sequence is that of Protein-L-isoaspartate O-methyltransferase from Cronobacter sakazakii (strain ATCC BAA-894) (Enterobacter sakazakii).